We begin with the raw amino-acid sequence, 1242 residues long: von Willebrand factor A domain-containing protein 5B2 (1242 aa).

The VIT domain maps to 1–138 (MPGLYCPSSW…TMTVTLHSSR (138 aa)). One can recognise a VWFA domain in the interval 354-527 (ELLFLLDSSS…KALEPALSDI (174 aa)). Disordered regions lie at residues 569–650 (SRPP…SDTA), 670–726 (CSAS…CPLP), 751–794 (LAGR…GQGL), 957–976 (CSSEPAEPPGTPPASHSHLD), 987–1055 (KGLQ…GSDH), and 1118–1159 (QGDS…GLGG). Positions 588–604 (PSPEEAPSAASPGTEPT) are enriched in low complexity. Polar residues predominate over residues 605-619 (GTSEPLGTGTVSAEL). Positions 681–700 (TGSSESPGSQGPGSPEGSAP) are enriched in low complexity. Residues 1125-1138 (SCSPSPSSGSEGPG) show a composition bias toward low complexity.

This Homo sapiens (Human) protein is von Willebrand factor A domain-containing protein 5B2 (VWA5B2).